We begin with the raw amino-acid sequence, 167 residues long: NAD(P)H-quinone oxidoreductase subunit I, chloroplastic (167 aa).

2 4Fe-4S ferredoxin-type domains span residues 55 to 84 (GRIH…VDWK) and 95 to 124 (LNYS…MTEE). [4Fe-4S] cluster contacts are provided by Cys64, Cys67, Cys70, Cys74, Cys104, Cys107, Cys110, and Cys114.

This sequence belongs to the complex I 23 kDa subunit family. As to quaternary structure, NDH is composed of at least 16 different subunits, 5 of which are encoded in the nucleus. It depends on [4Fe-4S] cluster as a cofactor.

Its subcellular location is the plastid. The protein localises to the chloroplast thylakoid membrane. The catalysed reaction is a plastoquinone + NADH + (n+1) H(+)(in) = a plastoquinol + NAD(+) + n H(+)(out). It catalyses the reaction a plastoquinone + NADPH + (n+1) H(+)(in) = a plastoquinol + NADP(+) + n H(+)(out). In terms of biological role, NDH shuttles electrons from NAD(P)H:plastoquinone, via FMN and iron-sulfur (Fe-S) centers, to quinones in the photosynthetic chain and possibly in a chloroplast respiratory chain. The immediate electron acceptor for the enzyme in this species is believed to be plastoquinone. Couples the redox reaction to proton translocation, and thus conserves the redox energy in a proton gradient. The polypeptide is NAD(P)H-quinone oxidoreductase subunit I, chloroplastic (Citrus sinensis (Sweet orange)).